Reading from the N-terminus, the 471-residue chain is Sulfate adenylyltransferase subunit 1 (471 aa).

In terms of domain architecture, tr-type G spans 22-237 (KELLRFLTCG…LESVQITGAK (216 aa)). A G1 region spans residues 31-38 (GSVDDGKS). 31–38 (GSVDDGKS) contacts GTP. The interval 89 to 93 (GITID) is G2. The segment at 110–113 (DTPG) is G3. Residues 110 to 114 (DTPGH) and 165 to 168 (NKMD) each bind GTP. Positions 165 to 168 (NKMD) are G4. Residues 202-204 (SAL) are G5.

Belongs to the TRAFAC class translation factor GTPase superfamily. Classic translation factor GTPase family. CysN/NodQ subfamily. In terms of assembly, heterodimer composed of CysD, the smaller subunit, and CysN.

It catalyses the reaction sulfate + ATP + H(+) = adenosine 5'-phosphosulfate + diphosphate. The protein operates within sulfur metabolism; hydrogen sulfide biosynthesis; sulfite from sulfate: step 1/3. Functionally, with CysD forms the ATP sulfurylase (ATPS) that catalyzes the adenylation of sulfate producing adenosine 5'-phosphosulfate (APS) and diphosphate, the first enzymatic step in sulfur assimilation pathway. APS synthesis involves the formation of a high-energy phosphoric-sulfuric acid anhydride bond driven by GTP hydrolysis by CysN coupled to ATP hydrolysis by CysD. This chain is Sulfate adenylyltransferase subunit 1, found in Saccharophagus degradans (strain 2-40 / ATCC 43961 / DSM 17024).